We begin with the raw amino-acid sequence, 1683 residues long: A-kinase anchor protein SPHKAP (1683 aa).

Composition is skewed to polar residues over residues 1–14 and 289–301; these read MDVNSRLSVQSNVE and AENTALQSLNPSA. Disordered regions lie at residues 1 to 30, 275 to 320, and 582 to 601; these read MDVNSRLSVQSNVESPLMPEDSEPQQITSS, RMPS…ATNY, and LLPTPGASEERSSIGSLVTE. Positions 910-927 are PKA-RII subunit binding domain; it reads FAEELAETVVSMATEIAA. The disordered stretch occupies residues 960 to 983; that stretch reads LKRKKENSGTGSTVRKHKPPRLSE. Serine 1006, serine 1066, serine 1088, serine 1101, serine 1102, serine 1105, serine 1240, and serine 1269 each carry phosphoserine. Disordered stretches follow at residues 1359-1387 and 1415-1518; these read VTEGNCSPVSSPSKMAPVKKPSGFDPTRE and ETDQ…DTSS. The span at 1362–1371 shows a compositional bias: polar residues; it reads GNCSPVSSPS. Residues 1469–1490 are compositionally biased toward basic and acidic residues; that stretch reads LETREELEVDVLKEDITLDESR. Low complexity predominate over residues 1492-1504; that stretch reads PPSSSEESTGSWS.

This sequence belongs to the AKAP110 family. In terms of assembly, interacts (via the PKA-RII subunit binding domain) with the RI subunit of PKA. Interacts with SPHK1; the interaction greatly reduces SPHK1 activity. In terms of tissue distribution, abundant in heart ventricle (at protein level).

It localises to the cytoplasm. Functionally, anchoring protein that binds preferentially to the type I regulatory subunit of c-AMP-dependent protein kinase (PKA type I) and targets it to distinct subcellular compartments. May act as a converging factor linking cAMP and sphingosine signaling pathways. Plays a regulatory role in the modulation of SPHK1. The protein is A-kinase anchor protein SPHKAP (Sphkap) of Rattus norvegicus (Rat).